A 109-amino-acid polypeptide reads, in one-letter code: A-type ATP synthase subunit F (109 aa).

This sequence belongs to the V-ATPase F subunit family. In terms of assembly, has multiple subunits with at least A(3), B(3), C, D, E, F, H, I and proteolipid K(x).

It localises to the cell membrane. In terms of biological role, component of the A-type ATP synthase that produces ATP from ADP in the presence of a proton gradient across the membrane. This Haloquadratum walsbyi (strain DSM 16790 / HBSQ001) protein is A-type ATP synthase subunit F.